A 357-amino-acid polypeptide reads, in one-letter code: Decapping nuclease RAI1 (357 aa).

Residue E157 participates in a divalent metal cation binding. The substrate site is built by C189 and E206. Positions 208, 226, and 227 each coordinate a divalent metal cation. 2 residues coordinate substrate: K228 and Q252.

Belongs to the DXO/Dom3Z family. As to quaternary structure, interacts with rat1; the interaction is direct, stabilizes rat1 protein structure and stimulates its exoribonuclease activity. The interaction also stimulates rai1 pyrophosphohydrolase activity, probably by recruiting it to mRNA substrates. A divalent metal cation is required as a cofactor.

It localises to the nucleus. It carries out the reaction a 5'-end NAD(+)-phospho-ribonucleoside in mRNA + H2O = a 5'-end phospho-ribonucleoside in mRNA + NAD(+) + H(+). The catalysed reaction is a 5'-end (N(7)-methyl 5'-triphosphoguanosine)-ribonucleoside-ribonucleotide in mRNA + H2O = a (N(7)-methyl 5'-triphosphoguanosine)-nucleoside + a 5'-end phospho-ribonucleoside in mRNA + H(+). It catalyses the reaction a 5'-end triphospho-ribonucleoside in mRNA + H2O = a 5'-end phospho-ribonucleoside in mRNA + diphosphate + H(+). In terms of biological role, decapping enzyme for NAD-capped RNAs: specifically hydrolyzes the nicotinamide adenine dinucleotide (NAD) cap from a subset of RNAs by removing the entire NAD moiety from the 5'-end of an NAD-capped RNA. The NAD-cap is present at the 5'-end of some RNAs and snoRNAs. In contrast to the canonical 5'-end N7 methylguanosine (m7G) cap, the NAD cap promotes mRNA decay. Also acts as a non-canonical decapping enzyme that removes the entire cap structure of m7G capped or incompletely capped RNAs. Has decapping activity toward incomplete 5'-end m7G cap mRNAs such as unmethylated 5'-end-capped RNA (cap0), while it has no activity toward 2'-O-ribose methylated m7G cap (cap1). Also possesses RNA 5'-pyrophosphohydrolase activity by hydrolyzing the 5'-end triphosphate to release pyrophosphates. Stimulates exoribonuclease activity of Rat1, allowing it to degrade RNAs with stable secondary structure more effectively. This Emericella nidulans (strain FGSC A4 / ATCC 38163 / CBS 112.46 / NRRL 194 / M139) (Aspergillus nidulans) protein is Decapping nuclease RAI1 (rai1).